The chain runs to 269 residues: 1-(5-phosphoribosyl)-5-[(5-phosphoribosylamino)methylideneamino] imidazole-4-carboxamide isomerase (269 aa).

The active-site Proton acceptor is D10. D132 acts as the Proton donor in catalysis.

It belongs to the HisA/HisF family.

The protein localises to the cytoplasm. The catalysed reaction is 1-(5-phospho-beta-D-ribosyl)-5-[(5-phospho-beta-D-ribosylamino)methylideneamino]imidazole-4-carboxamide = 5-[(5-phospho-1-deoxy-D-ribulos-1-ylimino)methylamino]-1-(5-phospho-beta-D-ribosyl)imidazole-4-carboxamide. The protein operates within amino-acid biosynthesis; L-histidine biosynthesis; L-histidine from 5-phospho-alpha-D-ribose 1-diphosphate: step 4/9. The polypeptide is 1-(5-phosphoribosyl)-5-[(5-phosphoribosylamino)methylideneamino] imidazole-4-carboxamide isomerase (Xylella fastidiosa (strain M12)).